A 443-amino-acid polypeptide reads, in one-letter code: Eukaryotic translation initiation factor 3 subunit M (443 aa).

In terms of domain architecture, PCI spans 205-375 (GLYQSTGNLA…SLIRIHSISS (171 aa)). The disordered stretch occupies residues 413-443 (ETVAQQGLGQQRRGGKRREEKKEKEDKEEQE). Basic and acidic residues predominate over residues 429–443 (RREEKKEKEDKEEQE).

The protein belongs to the eIF-3 subunit M family. In terms of assembly, component of the eukaryotic translation initiation factor 3 (eIF-3) complex.

The protein resides in the cytoplasm. Functionally, component of the eukaryotic translation initiation factor 3 (eIF-3) complex, which is involved in protein synthesis of a specialized repertoire of mRNAs and, together with other initiation factors, stimulates binding of mRNA and methionyl-tRNAi to the 40S ribosome. The eIF-3 complex specifically targets and initiates translation of a subset of mRNAs involved in cell proliferation. The chain is Eukaryotic translation initiation factor 3 subunit M from Cryptococcus neoformans var. neoformans serotype D (strain B-3501A) (Filobasidiella neoformans).